The chain runs to 34 residues: Brevinin-2GHa (34 aa).

C27 and C33 are oxidised to a cystine.

As to expression, expressed by the skin glands.

Its subcellular location is the secreted. Its function is as follows. Antimicrobial peptide. Active against the Gram-positive bacteria S.aureus FDA209P (MIC=14.9 ug/ml) and B.subtilis ATCC 6633 (MIC&gt;64 ug/ml), but not active against the Gram-negative bacterium E.coli or the fungus C.albicans. This chain is Brevinin-2GHa, found in Sylvirana guentheri (Gunther's frog).